Here is a 378-residue protein sequence, read N- to C-terminus: Queuine tRNA-ribosyltransferase (378 aa).

The active-site Proton acceptor is aspartate 91. Substrate is bound by residues 91 to 95, aspartate 145, glutamine 189, and glycine 216; that span reads DSGGF. Positions 247-253 are RNA binding; the sequence is GVGKPED. The active-site Nucleophile is aspartate 266. The segment at 271 to 275 is RNA binding; important for wobble base 34 recognition; sequence TRNAR. Cysteine 304, cysteine 306, cysteine 309, and histidine 335 together coordinate Zn(2+).

This sequence belongs to the queuine tRNA-ribosyltransferase family. In terms of assembly, homodimer. Within each dimer, one monomer is responsible for RNA recognition and catalysis, while the other monomer binds to the replacement base PreQ1. It depends on Zn(2+) as a cofactor.

It carries out the reaction 7-aminomethyl-7-carbaguanine + guanosine(34) in tRNA = 7-aminomethyl-7-carbaguanosine(34) in tRNA + guanine. It functions in the pathway tRNA modification; tRNA-queuosine biosynthesis. Its function is as follows. Catalyzes the base-exchange of a guanine (G) residue with the queuine precursor 7-aminomethyl-7-deazaguanine (PreQ1) at position 34 (anticodon wobble position) in tRNAs with GU(N) anticodons (tRNA-Asp, -Asn, -His and -Tyr). Catalysis occurs through a double-displacement mechanism. The nucleophile active site attacks the C1' of nucleotide 34 to detach the guanine base from the RNA, forming a covalent enzyme-RNA intermediate. The proton acceptor active site deprotonates the incoming PreQ1, allowing a nucleophilic attack on the C1' of the ribose to form the product. After dissociation, two additional enzymatic reactions on the tRNA convert PreQ1 to queuine (Q), resulting in the hypermodified nucleoside queuosine (7-(((4,5-cis-dihydroxy-2-cyclopenten-1-yl)amino)methyl)-7-deazaguanosine). This Vibrio vulnificus (strain CMCP6) protein is Queuine tRNA-ribosyltransferase.